A 186-amino-acid chain; its full sequence is Large ribosomal subunit protein uL10 (186 aa).

The protein belongs to the universal ribosomal protein uL10 family. Part of the ribosomal stalk of the 50S ribosomal subunit. The N-terminus interacts with L11 and the large rRNA to form the base of the stalk. The C-terminus forms an elongated spine to which L12 dimers bind in a sequential fashion forming a multimeric L10(L12)X complex.

Its function is as follows. Forms part of the ribosomal stalk, playing a central role in the interaction of the ribosome with GTP-bound translation factors. This chain is Large ribosomal subunit protein uL10 (rplJ), found in Streptomyces virginiae (Streptomyces cinnamonensis).